A 379-amino-acid polypeptide reads, in one-letter code: MISREELLSKLSQVLPQPLYKEVEEAVRDLDDEKALRLVYRVLKLYVTSLIDPGEAIGIVTAQSIGEPGTQMILRSFHYAGLREFSMARGLPRLIEVVDARRTPSTPLMYVYLKPPYNKSREAAESVAKKIQQVTLETLAKEVDVDYVAGTVTITLDQEQLKYRGLTLKDVEKIVAKAKGKDVAISMRGYTITASLTTPDILKIRKIKDKILQIKISGIKGVRKVVLQYDSKNDEWYIVTEGTNLEAVLQLEEVDPTRTYSNDLHEVEEVLGIEATRALVAQEIKRVLEEQGLDVDIRHMYLVADAMTWSGRLRPIGRHGVVGSKESPLARAAFEVTVKTLIEASVRGEDELFKGVVESIIAGKYVPIGTGIVRLLMQF.

This sequence belongs to the RNA polymerase beta' chain family. Part of the RNA polymerase complex.

The protein resides in the cytoplasm. It catalyses the reaction RNA(n) + a ribonucleoside 5'-triphosphate = RNA(n+1) + diphosphate. In terms of biological role, DNA-dependent RNA polymerase (RNAP) catalyzes the transcription of DNA into RNA using the four ribonucleoside triphosphates as substrates. Forms part of the jaw domain. The polypeptide is DNA-directed RNA polymerase subunit Rpo1C (Pyrobaculum aerophilum (strain ATCC 51768 / DSM 7523 / JCM 9630 / CIP 104966 / NBRC 100827 / IM2)).